A 498-amino-acid chain; its full sequence is Elastase (498 aa).

A signal peptide spans M1–A23. Positions A24–H197 are excised as a propeptide. C227 and C255 are disulfide-bonded. Residue D333 participates in Ca(2+) binding. H337 lines the Zn(2+) pocket. E338 is an active-site residue. Residues H341 and E361 each coordinate Zn(2+). E369, E372, D380, and L382 together coordinate Ca(2+). Catalysis depends on H420, which acts as the Proton donor. Residues C467 and C494 are joined by a disulfide bond.

It belongs to the peptidase M4 family. As to quaternary structure, monomer. It depends on Ca(2+) as a cofactor. Zn(2+) is required as a cofactor. Post-translationally, made as a membrane-associated pre-pro-protein, which is exported to the periplasm (yielding pro-elastase) with removal of the signal peptide. Under certain conditions pro-elastase can accumulate. The pro-peptide is removed in the periplasm yielding a (mature length) 33 kDa protein, probably by autocatalysis. The pro-peptide probably remains associated with elastase and can be secreted. Further alterations (perhaps processing) seems to be required before secretion into the extracellular space.

The protein localises to the secreted. It catalyses the reaction Hydrolysis of proteins including elastin, collagen types III and IV, fibronectin and immunoglobulin A, generally with bulky hydrophobic group at P1'. Insulin B chain cleavage pattern identical to that of thermolysin, but specificity differs in other respects.. Its activity is regulated as follows. Inhibited by phosphoramidon. Its function is as follows. Cleaves host elastin, collagen, IgG, and several complement components as well as endogenous pro-aminopeptidase. Autocatalyses processing of its pro-peptide. Processes the pro-peptide of pro-chitin-binding protein (cbpD). Involved in the pathogenesis of P.aeruginosa infections. This Pseudomonas aeruginosa (strain ATCC 15692 / DSM 22644 / CIP 104116 / JCM 14847 / LMG 12228 / 1C / PRS 101 / PAO1) protein is Elastase (lasB).